Reading from the N-terminus, the 228-residue chain is Histidine/lysine/arginine/ornithine transport system permease protein HisQ (228 aa).

At 1–12 (MLYGFSGVILQG) the chain is on the periplasmic side. Residues 13–33 (AIVTLELALSSVVLAVLIGLV) traverse the membrane as a helical segment. Positions 13–212 (AIVTLELALS…VFTTVSNGVL (200 aa)) constitute an ABC transmembrane type-1 domain. Topologically, residues 34 to 58 (GAGAKLSQNRVTGLIFEGYTTLIRG) are cytoplasmic. Residues 59–79 (VPDLVLMLLIFYGLQIALNVV) traverse the membrane as a helical segment. Residues 80 to 87 (TDSLGIDQ) lie on the Periplasmic side of the membrane. Residues 88–108 (IDIDPMVAGIITLGFIYGAYF) form a helical membrane-spanning segment. The Cytoplasmic portion of the chain corresponds to 109-152 (TETFRGAFMAVPKGHIEAATAFGFTHGQTFRRIMFPAMMRYALP). A helical membrane pass occupies residues 153–173 (GIGNNWQVILKATALVSLLGL). Over 174-194 (EDVVKATQLAGKSTWEPFYFA) the chain is Periplasmic. The chain crosses the membrane as a helical span at residues 195–215 (VVCGLIYLVFTTVSNGVLLLL). Topologically, residues 216–228 (ERRYSVGVKRADL) are cytoplasmic.

The protein belongs to the binding-protein-dependent transport system permease family. HisMQ subfamily. As to quaternary structure, the HisPMQJ complex is composed of two ATP-binding proteins (HisP), two transmembrane proteins (HisM and HisQ) and a solute-binding protein (HisJ). The HisPMQ-ArgT complex is composed of two ATP-binding proteins (HisP), two transmembrane proteins (HisM and HisQ) and a solute-binding protein (ArgT).

It localises to the cell inner membrane. Part of the ABC transporter complex HisPMQJ involved in histidine transport. Is also part of the ABC transporter complex HisPMQ-ArgT involved in lysine/arginine/ornithine transport. Probably responsible for the translocation of the substrate across the membrane. The protein is Histidine/lysine/arginine/ornithine transport system permease protein HisQ (hisQ) of Salmonella typhi.